The sequence spans 207 residues: Alpha/beta-tubulin-N-acetyltransferase 9 (207 aa).

Residues 35–180 (EELQRLTASE…QEVTLRLTVS (146 aa)) enclose the N-acetyltransferase domain.

The protein belongs to the acetyltransferase family. GNAT subfamily.

It carries out the reaction N-terminal L-methionyl-[tubulin] + acetyl-CoA = N-terminal N(alpha)-acetyl-L-methionyl-[tubulin] + CoA + H(+). Functionally, N-acetyltransferase that mediates the acetylation of the N-terminal residues of alpha- and beta-tubulin. This Homo sapiens (Human) protein is Alpha/beta-tubulin-N-acetyltransferase 9 (NAT9).